We begin with the raw amino-acid sequence, 184 residues long: Large ribosomal subunit protein uL5 (184 aa).

Belongs to the universal ribosomal protein uL5 family. As to quaternary structure, part of the 50S ribosomal subunit; part of the 5S rRNA/L5/L18/L25 subcomplex. Contacts the 5S rRNA and the P site tRNA. Forms a bridge to the 30S subunit in the 70S ribosome.

This is one of the proteins that bind and probably mediate the attachment of the 5S RNA into the large ribosomal subunit, where it forms part of the central protuberance. In the 70S ribosome it contacts protein S13 of the 30S subunit (bridge B1b), connecting the 2 subunits; this bridge is implicated in subunit movement. Contacts the P site tRNA; the 5S rRNA and some of its associated proteins might help stabilize positioning of ribosome-bound tRNAs. This is Large ribosomal subunit protein uL5 from Fervidobacterium nodosum (strain ATCC 35602 / DSM 5306 / Rt17-B1).